Here is a 322-residue protein sequence, read N- to C-terminus: Probable ATP-dependent 6-phosphofructokinase (322 aa).

ATP-binding positions include glycine 11, 72–73 (RF), and 102–105 (GDGS). Aspartate 103 serves as a coordination point for Mg(2+). Residues 125–127 (TID), 169–171 (MGR), glutamate 222, lysine 249, and 255–258 (YLQR) contribute to the substrate site. The Proton acceptor role is filled by aspartate 127.

This sequence belongs to the phosphofructokinase type A (PFKA) family. Homotetramer. Mg(2+) is required as a cofactor.

It localises to the cytoplasm. It carries out the reaction beta-D-fructose 6-phosphate + ATP = beta-D-fructose 1,6-bisphosphate + ADP + H(+). It participates in carbohydrate degradation; glycolysis; D-glyceraldehyde 3-phosphate and glycerone phosphate from D-glucose: step 3/4. Catalyzes the phosphorylation of D-fructose 6-phosphate to fructose 1,6-bisphosphate by ATP, the first committing step of glycolysis. This Malacoplasma penetrans (strain HF-2) (Mycoplasma penetrans) protein is Probable ATP-dependent 6-phosphofructokinase (pfkA).